Reading from the N-terminus, the 362-residue chain is S-adenosylmethionine:tRNA ribosyltransferase-isomerase (362 aa).

This sequence belongs to the QueA family. Monomer.

The protein localises to the cytoplasm. It catalyses the reaction 7-aminomethyl-7-carbaguanosine(34) in tRNA + S-adenosyl-L-methionine = epoxyqueuosine(34) in tRNA + adenine + L-methionine + 2 H(+). The protein operates within tRNA modification; tRNA-queuosine biosynthesis. Transfers and isomerizes the ribose moiety from AdoMet to the 7-aminomethyl group of 7-deazaguanine (preQ1-tRNA) to give epoxyqueuosine (oQ-tRNA). The protein is S-adenosylmethionine:tRNA ribosyltransferase-isomerase of Syntrophus aciditrophicus (strain SB).